The following is a 145-amino-acid chain: uncharacterized protein (145 aa).

A helical transmembrane segment spans residues 16–36 (VLAYLLQLSASLVLPVAIWLI).

The protein localises to the mitochondrion membrane. This is an uncharacterized protein from Arabidopsis thaliana (Mouse-ear cress).